We begin with the raw amino-acid sequence, 712 residues long: Cadherin-13 (712 aa).

The first 22 residues, 1–22 (MQHKTQLTLSFLLSQVLLLACA), serve as a signal peptide directing secretion. Residues 23–138 (EDLECTPGFQ…GNLGIPRQKR (116 aa)) constitute a propeptide that is removed on maturation. Asparagine 86 carries an N-linked (GlcNAc...) asparagine glycan. Cadherin domains follow at residues 143-245 (TPIL…RPMF), 246-363 (KEGP…PPEF), 364-477 (TKKE…GPVF), 478-585 (HPNP…VPSL), and 586-680 (YPTL…LQVC). Residues asparagine 382, asparagine 500, asparagine 530, asparagine 638, and asparagine 671 are each glycosylated (N-linked (GlcNAc...) asparagine). A lipid anchor (GPI-anchor amidated aspartate) is attached at aspartate 693. The propeptide at 694 to 712 (ALHISMTLILLSLFSLFCL) is removed in mature form.

In terms of assembly, by contrast to classical cadherins, homodimerization in trans is not mediated by cadherin EC1 domain strand-swapping, but instead through a homophilic adhesive interface which joins two elongated EC1-EC2 domains through a region near their Ca2+-binding sites to form a tetrahedral, X-like shape. In terms of tissue distribution, neural tissues. Also found in muscles; kidney and retina.

Its subcellular location is the cell membrane. The protein localises to the cytoplasm. In terms of biological role, cadherins are calcium-dependent cell adhesion proteins. They preferentially interact with themselves in a homophilic manner in connecting cells; cadherins may thus contribute to the sorting of heterogeneous cell types. May act as a negative regulator of neural cell growth. This is Cadherin-13 (CDH13) from Gallus gallus (Chicken).